We begin with the raw amino-acid sequence, 37 residues long: Large ribosomal subunit protein bL36 (37 aa).

This sequence belongs to the bacterial ribosomal protein bL36 family.

The protein is Large ribosomal subunit protein bL36 of Deinococcus deserti (strain DSM 17065 / CIP 109153 / LMG 22923 / VCD115).